Reading from the N-terminus, the 394-residue chain is Phosphoglycerate kinase (394 aa).

Substrate-binding positions include 21–23, arginine 36, 59–62, arginine 118, and arginine 151; these read DFN and HLGR. At serine 183 the chain carries Phosphoserine. 2 residues coordinate ATP: lysine 201 and glycine 292. Position 299 is a phosphothreonine (threonine 299). ATP contacts are provided by residues glutamate 323 and 350-353; that span reads GGDS.

This sequence belongs to the phosphoglycerate kinase family. As to quaternary structure, monomer.

The protein localises to the cytoplasm. The enzyme catalyses (2R)-3-phosphoglycerate + ATP = (2R)-3-phospho-glyceroyl phosphate + ADP. It functions in the pathway carbohydrate degradation; glycolysis; pyruvate from D-glyceraldehyde 3-phosphate: step 2/5. This is Phosphoglycerate kinase from Bacillus cereus (strain ATCC 10987 / NRS 248).